Reading from the N-terminus, the 388-residue chain is Succinate--CoA ligase [ADP-forming] subunit beta (388 aa).

In terms of domain architecture, ATP-grasp spans 9-244 (KKLFAEYGLP…PSQDDPREAH (236 aa)). Residues K46, 53 to 55 (GRG), E99, T102, and E107 contribute to the ATP site. 2 residues coordinate Mg(2+): N199 and D213. Substrate-binding positions include N264 and 321-323 (GIV).

This sequence belongs to the succinate/malate CoA ligase beta subunit family. In terms of assembly, heterotetramer of two alpha and two beta subunits. Mg(2+) serves as cofactor.

It catalyses the reaction succinate + ATP + CoA = succinyl-CoA + ADP + phosphate. The enzyme catalyses GTP + succinate + CoA = succinyl-CoA + GDP + phosphate. The protein operates within carbohydrate metabolism; tricarboxylic acid cycle; succinate from succinyl-CoA (ligase route): step 1/1. In terms of biological role, succinyl-CoA synthetase functions in the citric acid cycle (TCA), coupling the hydrolysis of succinyl-CoA to the synthesis of either ATP or GTP and thus represents the only step of substrate-level phosphorylation in the TCA. The beta subunit provides nucleotide specificity of the enzyme and binds the substrate succinate, while the binding sites for coenzyme A and phosphate are found in the alpha subunit. The chain is Succinate--CoA ligase [ADP-forming] subunit beta from Aeromonas salmonicida (strain A449).